Consider the following 380-residue polypeptide: Chaperone protein DnaJ (380 aa).

Residues 4–69 (DYYEILGVTR…QKRAAYDRFG (66 aa)) form the J domain. The segment at 135–213 (GKTAQINIPS…CQGTRRVEKN (79 aa)) adopts a CR-type zinc-finger fold. Zn(2+) is bound by residues Cys148, Cys151, Cys165, Cys168, Cys187, Cys190, Cys201, and Cys204. CXXCXGXG motif repeat units lie at residues 148–155 (CDSCEGSG), 165–172 (CGTCHGAG), 187–194 (CHACNGRG), and 201–208 (CPKCQGTR).

The protein belongs to the DnaJ family. As to quaternary structure, homodimer. It depends on Zn(2+) as a cofactor.

The protein resides in the cytoplasm. Functionally, participates actively in the response to hyperosmotic and heat shock by preventing the aggregation of stress-denatured proteins and by disaggregating proteins, also in an autonomous, DnaK-independent fashion. Unfolded proteins bind initially to DnaJ; upon interaction with the DnaJ-bound protein, DnaK hydrolyzes its bound ATP, resulting in the formation of a stable complex. GrpE releases ADP from DnaK; ATP binding to DnaK triggers the release of the substrate protein, thus completing the reaction cycle. Several rounds of ATP-dependent interactions between DnaJ, DnaK and GrpE are required for fully efficient folding. Also involved, together with DnaK and GrpE, in the DNA replication of plasmids through activation of initiation proteins. The polypeptide is Chaperone protein DnaJ (Bartonella quintana (strain Toulouse) (Rochalimaea quintana)).